The following is a 540-amino-acid chain: MAAKEVKFSTDARDRVLRGVDTLANAVKVTLGPKGRNVVIEKSFGAPRITKDGVTVAKEIELEDKFENMGAQMVREVASKTSDLAGDGTTTATVLAQAIVKEGAKSVAAGMNPMDLKRGIDLAVEAIVNDLKAHAKKVTTNEEIAQIATISANGDIEIGRFLADAMQKVGNDGVITVEEAKSLDTELEVVEGMQFDRGYASPYFVTNAEKMRVEFEDPYILIHEKKLSTLQSMLPLLEAVVQSGKPLLVVAEDVEGEALATLVVNRLRGGLKVAAVKAPGFGDRRKAMLEDIAILTGGQAISEDLGIKLENVTLKMLGRAKKVVIDKENTTIVNGAGSKKDIEARVTQIKMQIEETTSDYDREKLQERLAKLAGGVAVIRVGGATEVEVKERKDRVDDAMHATRAAVEEGILPGGGVALLRGLKALDAIKTVNADQKAGVDIVRRAIQVPARQIVQNAGEDGSLVVGKLLENSSYNWGFNAASGEYQDLAKAGVIDPAKVVRTALQDAASVAALLITTEALIAEKPKKSEPAPAAPPMDF.

ATP is bound by residues 30–33 (TLGP), lysine 51, 87–91 (DGTTT), glycine 415, 480–482 (NAA), and aspartate 496.

The protein belongs to the chaperonin (HSP60) family. Forms a cylinder of 14 subunits composed of two heptameric rings stacked back-to-back. Interacts with the co-chaperonin GroES.

It is found in the cytoplasm. The enzyme catalyses ATP + H2O + a folded polypeptide = ADP + phosphate + an unfolded polypeptide.. In terms of biological role, together with its co-chaperonin GroES, plays an essential role in assisting protein folding. The GroEL-GroES system forms a nano-cage that allows encapsulation of the non-native substrate proteins and provides a physical environment optimized to promote and accelerate protein folding. The protein is Chaperonin GroEL 1 of Bradyrhizobium diazoefficiens (strain JCM 10833 / BCRC 13528 / IAM 13628 / NBRC 14792 / USDA 110).